Consider the following 297-residue polypeptide: HTH-type transcriptional regulator ArgP (297 aa).

In terms of domain architecture, HTH lysR-type spans 4 to 60 (PDYRTLQALDAVIRERGFERAAQKLCITQSAVSQRIKQLENMFGQPLLVRTVPPRPT). Residues 21–40 (FERAAQKLCITQSAVSQRIK) constitute a DNA-binding region (H-T-H motif).

The protein belongs to the LysR transcriptional regulatory family. Homodimer.

In terms of biological role, controls the transcription of genes involved in arginine and lysine metabolism. This is HTH-type transcriptional regulator ArgP from Salmonella choleraesuis (strain SC-B67).